The following is a 341-amino-acid chain: L-threonine 3-dehydrogenase (341 aa).

Cysteine 38 contributes to the Zn(2+) binding site. Catalysis depends on charge relay system residues threonine 40 and histidine 43. Zn(2+) contacts are provided by histidine 63, glutamate 64, cysteine 93, cysteine 96, cysteine 99, and cysteine 107. Residues isoleucine 175, aspartate 195, arginine 200, 262 to 264, and 286 to 287 contribute to the NAD(+) site; these read LGI and IY.

This sequence belongs to the zinc-containing alcohol dehydrogenase family. As to quaternary structure, homotetramer. It depends on Zn(2+) as a cofactor.

It localises to the cytoplasm. It carries out the reaction L-threonine + NAD(+) = (2S)-2-amino-3-oxobutanoate + NADH + H(+). The protein operates within amino-acid degradation; L-threonine degradation via oxydo-reductase pathway; glycine from L-threonine: step 1/2. Its function is as follows. Catalyzes the NAD(+)-dependent oxidation of L-threonine to 2-amino-3-ketobutyrate. In Shewanella sp. (strain ANA-3), this protein is L-threonine 3-dehydrogenase.